Consider the following 529-residue polypeptide: Bifunctional purine biosynthesis protein PurH (529 aa).

The region spanning 1–148 is the MGS-like domain; it reads MTNRNVIKNV…KNYKNVLVVT (148 aa).

The protein belongs to the PurH family.

It carries out the reaction (6R)-10-formyltetrahydrofolate + 5-amino-1-(5-phospho-beta-D-ribosyl)imidazole-4-carboxamide = 5-formamido-1-(5-phospho-D-ribosyl)imidazole-4-carboxamide + (6S)-5,6,7,8-tetrahydrofolate. It catalyses the reaction IMP + H2O = 5-formamido-1-(5-phospho-D-ribosyl)imidazole-4-carboxamide. Its pathway is purine metabolism; IMP biosynthesis via de novo pathway; 5-formamido-1-(5-phospho-D-ribosyl)imidazole-4-carboxamide from 5-amino-1-(5-phospho-D-ribosyl)imidazole-4-carboxamide (10-formyl THF route): step 1/1. The protein operates within purine metabolism; IMP biosynthesis via de novo pathway; IMP from 5-formamido-1-(5-phospho-D-ribosyl)imidazole-4-carboxamide: step 1/1. In Buchnera aphidicola subsp. Baizongia pistaciae (strain Bp), this protein is Bifunctional purine biosynthesis protein PurH.